Consider the following 59-residue polypeptide: Cecropin-B1 (59 aa).

A signal peptide spans 1-23 (MNFNKLFLIVILAALLLLGQTEA). Leu57 is subject to Leucine amide.

The protein belongs to the cecropin family.

Its subcellular location is the secreted. Its function is as follows. Cecropins have lytic and antibacterial activity against several Gram-positive and Gram-negative bacteria. The polypeptide is Cecropin-B1 (CECB1) (Culex pipiens pipiens (Northern house mosquito)).